The sequence spans 247 residues: MKVKCTVSYDGTHFKGYQVQPGQRTVQTEIESALAKMHKQDELVPIVASGRTDSGVHAKGQVIHFDTPLSIPMERWPFALNSLLPDDIRVLKAEEVDESFHARFSVVSKEYRYKVSTETHQNVFTRQYACHFPYRLDADKMREAAGYLIGTHDFTSFCAANTEVQDKVREIYTLEWKNVSDGLEMRVRGNGFLYNMVRIIAGTLLEVGSGKFHPDEIKAMLAARNREAAGKTAPSHGLYLWEVFYDN.

Asp53 (nucleophile) is an active-site residue. Residue Tyr111 coordinates substrate.

Belongs to the tRNA pseudouridine synthase TruA family. In terms of assembly, homodimer.

The enzyme catalyses uridine(38/39/40) in tRNA = pseudouridine(38/39/40) in tRNA. Functionally, formation of pseudouridine at positions 38, 39 and 40 in the anticodon stem and loop of transfer RNAs. The protein is tRNA pseudouridine synthase A of Bacillus pumilus (strain SAFR-032).